The following is a 565-amino-acid chain: Arginine--tRNA ligase (565 aa).

Residues 126-136 carry the 'HIGH' region motif; the sequence is ANPTGPLHIGH.

The protein belongs to the class-I aminoacyl-tRNA synthetase family. In terms of assembly, monomer.

The protein resides in the cytoplasm. The enzyme catalyses tRNA(Arg) + L-arginine + ATP = L-arginyl-tRNA(Arg) + AMP + diphosphate. This chain is Arginine--tRNA ligase, found in Wolbachia sp. subsp. Brugia malayi (strain TRS).